Consider the following 205-residue polypeptide: Large ribosomal subunit protein bL25 (205 aa).

The tract at residues 178-205 (FPETEPVEDEESAGEDAQGESEEKAAKE) is disordered. Acidic residues predominate over residues 182–197 (EPVEDEESAGEDAQGE).

The protein belongs to the bacterial ribosomal protein bL25 family. CTC subfamily. Part of the 50S ribosomal subunit; part of the 5S rRNA/L5/L18/L25 subcomplex. Contacts the 5S rRNA. Binds to the 5S rRNA independently of L5 and L18.

Its function is as follows. This is one of the proteins that binds to the 5S RNA in the ribosome where it forms part of the central protuberance. This chain is Large ribosomal subunit protein bL25, found in Cutibacterium acnes (strain DSM 16379 / KPA171202) (Propionibacterium acnes).